The sequence spans 367 residues: Diphthine methyltransferase homolog (367 aa).

4 WD repeats span residues 84–124 (NFNS…KKLE), 132–173 (SLSN…SKVT), 180–220 (AHDY…NHND), and 234–274 (RCDM…QPII).

It belongs to the DPH7 family.

It carries out the reaction diphthine methyl ester-[translation elongation factor 2] + H2O = diphthine-[translation elongation factor 2] + methanol + H(+). It functions in the pathway protein modification; peptidyl-diphthamide biosynthesis. Functionally, catalyzes the demethylation of diphthine methyl ester to form diphthine, an intermediate diphthamide biosynthesis, a post-translational modification of histidine which occurs in translation elongation factor 2 (efbA). The chain is Diphthine methyltransferase homolog (wdr85) from Dictyostelium discoideum (Social amoeba).